The primary structure comprises 446 residues: MRKLWAPNWLSRRQNANPTRDQSRHALMAWLAAALMSAGAAHAQLNVEITGVGSNQFPVATANFQGEAQAPQNLTAIIRSDLTNSGRFRNVDPAGATVAESAQVDLGSWKAKGADAFVAGSVTPTSNGQYEVRFRLYDTAKGQSLGGLAFTVTQGQLRVTAHKIADYIYEKLLGERGVFATRLSYVSKVGNRYQLLISDSDGQNAQIALTSTEPIISPAWSPDGRRVAYVSFEAKKPVVYVHDLATGKRVVVSNQKGNNSAPSWSPDGQHLAVSLSRDGNTQIYQVNADGSGLRRLTRSSAIDTEPQFSPDGRSIYFTSDRGGAPQIYRMPASGEESGAAQRVTFKGSYNVSPRISPDGKYLAYISRSGGFRLQLQDLSNGDVTSLTDTTNDESPSFAANGKYILYATRVGGRSVLAAVSTDGRTKQVLSLQSGAVREPSWGPFMQ.

Residues 1–43 (MRKLWAPNWLSRRQNANPTRDQSRHALMAWLAAALMSAGAAHA) form the signal peptide.

The protein belongs to the TolB family. As to quaternary structure, the Tol-Pal system is composed of five core proteins: the inner membrane proteins TolA, TolQ and TolR, the periplasmic protein TolB and the outer membrane protein Pal. They form a network linking the inner and outer membranes and the peptidoglycan layer.

It localises to the periplasm. Functionally, part of the Tol-Pal system, which plays a role in outer membrane invagination during cell division and is important for maintaining outer membrane integrity. The sequence is that of Tol-Pal system protein TolB from Cupriavidus metallidurans (strain ATCC 43123 / DSM 2839 / NBRC 102507 / CH34) (Ralstonia metallidurans).